The chain runs to 59 residues: Cuticle protein 7 isoform a (59 aa).

Position 1 is a pyrrolidone carboxylic acid (Q1).

The protein is Cuticle protein 7 isoform a of Limulus polyphemus (Atlantic horseshoe crab).